A 294-amino-acid chain; its full sequence is Cytidine deaminase (294 aa).

2 consecutive CMP/dCMP-type deaminase domains span residues 48-168 (DDDA…FGPR) and 186-294 (LKGD…VTLA). 89–91 (NME) is a substrate binding site. His102 serves as a coordination point for Zn(2+). The active-site Proton donor is Glu104. Cys129 and Cys132 together coordinate Zn(2+).

The protein belongs to the cytidine and deoxycytidylate deaminase family. Homodimer. Requires Zn(2+) as cofactor.

It catalyses the reaction cytidine + H2O + H(+) = uridine + NH4(+). It carries out the reaction 2'-deoxycytidine + H2O + H(+) = 2'-deoxyuridine + NH4(+). In terms of biological role, this enzyme scavenges exogenous and endogenous cytidine and 2'-deoxycytidine for UMP synthesis. This chain is Cytidine deaminase, found in Cronobacter sakazakii (strain ATCC BAA-894) (Enterobacter sakazakii).